A 310-amino-acid polypeptide reads, in one-letter code: Putative type II methyltransferase M.MJ0563P (310 aa).

The 310-residue stretch at 1–310 folds into the SAM-dependent MTase C5-type domain; the sequence is MNVIDLFSGC…AIAKEIKKQL (310 aa). Residue Cys77 is part of the active site.

The protein belongs to the class I-like SAM-binding methyltransferase superfamily. C5-methyltransferase family.

The catalysed reaction is a 2'-deoxycytidine in DNA + S-adenosyl-L-methionine = a 5-methyl-2'-deoxycytidine in DNA + S-adenosyl-L-homocysteine + H(+). A putative methylase that may protect DNA from cleavage by an unknown endonuclease. The chain is Putative type II methyltransferase M.MJ0563P from Methanocaldococcus jannaschii (strain ATCC 43067 / DSM 2661 / JAL-1 / JCM 10045 / NBRC 100440) (Methanococcus jannaschii).